Consider the following 434-residue polypeptide: NADH-quinone oxidoreductase subunit F 1 (434 aa).

Position 54–63 (54–63 (GRGGAGFPTG)) interacts with NAD(+). Residue 166 to 213 (GAGAYICGEETALLESLEGKKGQPRLKPPFPANMGLYGCPTTVNNVES) participates in FMN binding. Cys-345, Cys-348, Cys-351, and Cys-391 together coordinate [4Fe-4S] cluster.

It belongs to the complex I 51 kDa subunit family. FMN is required as a cofactor. The cofactor is [4Fe-4S] cluster.

The catalysed reaction is a quinone + NADH + 5 H(+)(in) = a quinol + NAD(+) + 4 H(+)(out). Its function is as follows. NDH-1 shuttles electrons from NADH, via FMN and iron-sulfur (Fe-S) centers, to quinones in the respiratory chain. The immediate electron acceptor for the enzyme in this species is believed to be ubiquinone. Couples the redox reaction to proton translocation (for every two electrons transferred, four hydrogen ions are translocated across the cytoplasmic membrane), and thus conserves the redox energy in a proton gradient. The polypeptide is NADH-quinone oxidoreductase subunit F 1 (nuoF1) (Rhizobium meliloti (strain 1021) (Ensifer meliloti)).